The sequence spans 962 residues: MEDCNVHSAASILASVKEQEARFERLTRALEQERRHVALQLERAQQPGMSSGGMVGSGQPLPMAWQQLVLQEQSPGSQASLATMPEAPEVLEETVTVEEDPGTPTSHVSIVTSEDGTTRRTETKVTKTVKTVTTRTVRQVPLGPDGLPLLDGGPPLGSFADGPLDRHYLLRGGGGPAATLSRTYHSSGGGFPDGPESRDIPSYGSLSRGLGVRPPRTGLLGPGPGDGCFTLPGRREAFPMGSESGPPSGRSLPEHFQAEPYGLEDDTRSLAADDEGGPDLEPDYSTATRRRPEYGRGLRARAFEDTADDAGELIEERPPFPAATAPLAQPERGSLGSLDRVVRRSPSVDSTRKEPRWRDPELPEVLAMLRHPVDPVKANAAAYLQHLCFENEGIKRRVRQLRGLPLLVALLDHPRAEVRRRACGALRNLSYGRDTDNKAAIRDCGGVPALVRLLRAARDNEVRELVTGTLWNLSSYEPLKMVIIDHGLQTLTHEVIVPHSGWEREPNEDSKPRDAEWTTVFKNTSGCLRNVSSDGAEARRRLRECEGLVDALLHALQSAVGRKDTDNKSVENCVCIMRNLSYHVHKEVPGADRYQEAEPGIPGSTTSQRRRKDDASCFGGKKAKEEWFHQGKKDAEMDRNFDTLDLPKRTEAAKGFELLYQPEVVRLYLSLLTESRNFNTLEAAAGALQNLSAGNWTWATYIRATVRKERGLPVLVELLQSETDKVVRAVAIALRNLSLDQRNKDLIGSYAMTELVRNVRNAQAPAHPSAHLEEDTVVAVLNTIHEIVSDSLDNARSLLQARGVPALVALVASSQSVREAKAASHVLQTVWSYKELRGALQRDGWTKSRFQSASTAKGPKGTPSSGGFDDSTLPLVDKSLDGEKSNTRDVIPMDTLGPDGYATVDRRERRTLGSDSTGDTSEKELLRPDPGRKAPPPGPSRPSVRLVDAVGDTKPQPVDSWV.

The stretch at S11–Q46 forms a coiled coil. Residues V95–T123 are disordered. A phosphothreonine mark is found at T103 and T105. Over residues T103–D115 the composition is skewed to polar residues. At R171 the chain carries Omega-N-methylarginine. Disordered regions lie at residues G233–H255, R268–R291, and A322–W357. A Phosphoserine modification is found at S269. Positions A272 to P282 are enriched in acidic residues. Phosphoserine occurs at positions 334, 337, 345, and 347. ARM repeat units follow at residues S350–F389, E392–Y431, T435–T469, L470–S510, L528–N567, and M577–A623. Residues R593–F618 are disordered. S607 is subject to Phosphoserine. A Nuclear localization signal motif is present at residues Q608–K624. T643 bears the Phosphothreonine mark. ARM repeat units follow at residues P647–A687, T700–L739, D740–N782, and T783–L827. The segment at V777–V962 is required for interaction with RNA-binding proteins DDX5, HNRNPH2 and SRSF1 and with mRNAs. A disordered region spans residues G844–V962. Phosphoserine is present on residues S864 and S871. Position 872 is a phosphothreonine (T872). 2 stretches are compositionally biased toward basic and acidic residues: residues K878–T887 and T920–R932.

This sequence belongs to the beta-catenin family. As to quaternary structure, component of a ribonucleoprotein complex containing mRNAs and RNA-binding proteins including DDX5, HNRNPH2 and SRSF1 as well as ARVCF. Interacts (via the extreme C-terminus) with FRMPD2 (via the PDZ 2 domain). Interacts with CCDC85B.

Its subcellular location is the cell junction. The protein localises to the adherens junction. It is found in the nucleus. It localises to the cytoplasm. Its function is as follows. Contributes to the regulation of alternative splicing of pre-mRNAs. In Mus musculus (Mouse), this protein is Splicing regulator ARVCF (Arvcf).